The primary structure comprises 521 residues: Glutamate--tRNA ligase (521 aa).

A 'HIGH' region motif is present at residues 13-23 (PSPSGFLHVGG). Residues 253–257 (KLSKR) carry the 'KMSKS' region motif. Lys-256 is a binding site for ATP.

This sequence belongs to the class-I aminoacyl-tRNA synthetase family. Glutamate--tRNA ligase type 1 subfamily. As to quaternary structure, monomer.

It localises to the cytoplasm. It carries out the reaction tRNA(Glu) + L-glutamate + ATP = L-glutamyl-tRNA(Glu) + AMP + diphosphate. Its function is as follows. Catalyzes the attachment of glutamate to tRNA(Glu) in a two-step reaction: glutamate is first activated by ATP to form Glu-AMP and then transferred to the acceptor end of tRNA(Glu). The sequence is that of Glutamate--tRNA ligase from Leptospira interrogans serogroup Icterohaemorrhagiae serovar copenhageni (strain Fiocruz L1-130).